We begin with the raw amino-acid sequence, 312 residues long: Beta-lactamase regulatory protein BlaB (312 aa).

In Streptomyces cacaoi, this protein is Beta-lactamase regulatory protein BlaB (blaB).